The chain runs to 70 residues: MTTIRLKENEPVEVALRRFRREIERTGLIKELRARTAYEKPTTERKRKKAAAVSRTRKRLRSQMLPKKLY.

The segment at E39–Y70 is disordered. Basic residues predominate over residues R45–R61.

This sequence belongs to the bacterial ribosomal protein bS21 family.

In Ralstonia nicotianae (strain ATCC BAA-1114 / GMI1000) (Ralstonia solanacearum), this protein is Small ribosomal subunit protein bS21.